A 791-amino-acid polypeptide reads, in one-letter code: Cytochrome c oxidase polypeptide I+III (791 aa).

The tract at residues 1-473 (MAITAKPKAG…LLSTIGAYIL (473 aa)) is COX1. A helical membrane pass occupies residues 29 to 49 (LMYTATAFFAFALAGVFSLLI). His73 lines the Fe(II)-heme a pocket. Transmembrane regions (helical) follow at residues 78 to 98 (LFFF…VPLM), 111 to 131 (AFSY…YFFP), 155 to 175 (FYLA…ANFV), 201 to 221 (ASVL…LVLL), 244 to 264 (FFWF…LGIL), 282 to 302 (MVWA…HHMF), 312 to 332 (IAFA…LFNI), 347 to 367 (LYWV…GVML), 381 to 401 (FVVA…AFAG), 423 to 443 (FWLF…LGYL), 464 to 484 (LLST…IYTM), 566 to 586 (FAFF…WVFL), 617 to 637 (AWMG…ILIA), 657 to 677 (LWLA…VHFA), 691 to 711 (FGLL…SWEF), 729 to 749 (FFTI…GLIL), and 771 to 791 (SMYW…FYVW). 4 residues coordinate Cu cation: His250, Tyr254, His299, and His300. Positions 250–254 (HPTVY) form a cross-link, 1'-histidyl-3'-tyrosine (His-Tyr). Residue His385 coordinates heme a3. His387 serves as a coordination point for Fe(II)-heme a. The segment at 545–791 (DPAHIHLPNS…LVIVTIFYVW (247 aa)) is COX3.

This sequence in the N-terminal section; belongs to the heme-copper respiratory oxidase family. It in the C-terminal section; belongs to the cytochrome c oxidase subunit 3 family. Possibly a heterodimer of A-protein (contains: cytochrome c oxidase subunits I and III) and subunit II. The A-protein could also present a precursor form of subunits I and III. Cu(2+) is required as a cofactor. Heme serves as cofactor.

Its subcellular location is the cell membrane. The catalysed reaction is 4 Fe(II)-[cytochrome c] + O2 + 8 H(+)(in) = 4 Fe(III)-[cytochrome c] + 2 H2O + 4 H(+)(out). The protein operates within energy metabolism; oxidative phosphorylation. In terms of biological role, cytochrome c oxidase is the component of the respiratory chain that catalyzes the reduction of oxygen to water. Subunits 1-3 form the functional core of the enzyme complex. Co I is the catalytic subunit of the enzyme. Electrons originating in cytochrome c are transferred via the copper A center of subunit 2 and heme a of subunit 1 to the bimetallic center formed by heme a3 and copper B. This cytochrome c oxidase shows proton pump activity across the membrane in addition to the electron transfer. The protein is Cytochrome c oxidase polypeptide I+III (caaA) of Thermus thermophilus (strain ATCC 27634 / DSM 579 / HB8).